Reading from the N-terminus, the 209-residue chain is Nucleoside triphosphate pyrophosphatase (209 aa).

Aspartate 74 functions as the Proton acceptor in the catalytic mechanism.

Belongs to the Maf family. The cofactor is a divalent metal cation.

It localises to the cytoplasm. The enzyme catalyses a ribonucleoside 5'-triphosphate + H2O = a ribonucleoside 5'-phosphate + diphosphate + H(+). It catalyses the reaction a 2'-deoxyribonucleoside 5'-triphosphate + H2O = a 2'-deoxyribonucleoside 5'-phosphate + diphosphate + H(+). Functionally, nucleoside triphosphate pyrophosphatase. May have a dual role in cell division arrest and in preventing the incorporation of modified nucleotides into cellular nucleic acids. In Neorickettsia sennetsu (strain ATCC VR-367 / Miyayama) (Ehrlichia sennetsu), this protein is Nucleoside triphosphate pyrophosphatase.